A 502-amino-acid chain; its full sequence is Exodeoxyribonuclease 7 large subunit (502 aa).

Residues 474–495 show a composition bias toward low complexity; it reads SAPSTTKKSAPKPAAPKAPKTP. A disordered region spans residues 474 to 502; it reads SAPSTTKKSAPKPAAPKAPKTPGEQGSLF.

This sequence belongs to the XseA family. In terms of assembly, heterooligomer composed of large and small subunits.

Its subcellular location is the cytoplasm. The catalysed reaction is Exonucleolytic cleavage in either 5'- to 3'- or 3'- to 5'-direction to yield nucleoside 5'-phosphates.. Bidirectionally degrades single-stranded DNA into large acid-insoluble oligonucleotides, which are then degraded further into small acid-soluble oligonucleotides. The polypeptide is Exodeoxyribonuclease 7 large subunit (Ruegeria sp. (strain TM1040) (Silicibacter sp.)).